A 102-amino-acid chain; its full sequence is NADH-quinone oxidoreductase subunit K (102 aa).

Helical transmembrane passes span 5–25 (ITHYLTVSALMFTIGIAGIFL), 31–51 (IIILMSIELILLSVNLNFVAF), and 66–86 (FVLTVAAAEAAIGLAILVVFF).

Belongs to the complex I subunit 4L family. In terms of assembly, NDH-1 is composed of 14 different subunits. Subunits NuoA, H, J, K, L, M, N constitute the membrane sector of the complex.

It is found in the cell inner membrane. The enzyme catalyses a quinone + NADH + 5 H(+)(in) = a quinol + NAD(+) + 4 H(+)(out). In terms of biological role, NDH-1 shuttles electrons from NADH, via FMN and iron-sulfur (Fe-S) centers, to quinones in the respiratory chain. The immediate electron acceptor for the enzyme in this species is believed to be ubiquinone. Couples the redox reaction to proton translocation (for every two electrons transferred, four hydrogen ions are translocated across the cytoplasmic membrane), and thus conserves the redox energy in a proton gradient. This chain is NADH-quinone oxidoreductase subunit K, found in Bartonella grahamii (strain as4aup).